The primary structure comprises 188 residues: Oleosin S2-2 (188 aa).

At alanine 2 the chain carries N-acetylalanine. The interval 2–51 (ATVERRVQVDPTDKRIHLQPQYEGDVGYGYGYGGRADYKSSGPSSNQIVA) is polar. Transmembrane regions (helical) follow at residues 49–69 (IVAL…AGLT), 74–94 (VIGL…IVPA), and 96–116 (ITIG…LTGL). Residues 52-125 (LIVGVPVGGS…LSSVSWVLNY (74 aa)) are hydrophobic. The segment at 164 to 188 (DKAHEAHDTSLTTETTEPGKTRRHT) is disordered. Polar residues predominate over residues 172 to 181 (TSLTTETTEP).

This sequence belongs to the oleosin family.

The protein localises to the lipid droplet. It is found in the membrane. In terms of biological role, may have a structural role to stabilize the lipid body during desiccation of the seed by preventing coalescence of the oil. Probably interacts with both lipid and phospholipid moieties of lipid bodies. May also provide recognition signals for specific lipase anchorage in lipolysis during seedling growth. The sequence is that of Oleosin S2-2 (S2) from Brassica napus (Rape).